A 477-amino-acid polypeptide reads, in one-letter code: Spliceosome-associated protein CWC27 homolog (477 aa).

Residues 11 to 166 (SNGKVLLKTT…NPHKIKCTEV (156 aa)) enclose the PPIase cyclophilin-type domain. Disordered regions lie at residues 203-355 (LLSF…AENT) and 401-477 (TQAI…KERR). Residues 208–218 (EEAEEDEEEVN) show a composition bias toward acidic residues. Composition is skewed to basic and acidic residues over residues 230–240 (SSHDLLKDDPR) and 247–258 (VEREKDSQSADS). Over residues 259–279 (DKDEDEMSDDDDEEEDDEMDS) the composition is skewed to acidic residues. 3 stretches are compositionally biased toward basic and acidic residues: residues 280 to 299 (DEKHQMKDRISNKLRKDPSK), 311 to 353 (EERK…KEAE), and 430 to 442 (QFEEKSGKVKDAN). A coiled-coil region spans residues 308-381 (DEAEERKSSR…EEVRKKNTNK (74 aa)).

The protein belongs to the cyclophilin-type PPIase family. In terms of assembly, part of the activated spliceosome B/catalytic step 1 spliceosome, one of the forms of the spliceosome which has a well-formed active site but still cannot catalyze the branching reaction and is composed at least of 52 proteins, the U2, U5 and U6 snRNAs and the pre-mRNA. Recruited during early steps of activated spliceosome B maturation, it is probably one of the first proteins released from this complex as he matures to the spliceosome C complex. Component of the minor spliceosome, which splices U12-type introns.

The protein resides in the nucleus. Functionally, as part of the spliceosome, plays a role in pre-mRNA splicing. Probable inactive PPIase with no peptidyl-prolyl cis-trans isomerase activity. The chain is Spliceosome-associated protein CWC27 homolog (cwc27) from Xenopus laevis (African clawed frog).